The sequence spans 83 residues: Disintegrin isoform D-2 (83 aa).

A Disintegrin domain is found at 2-83; that stretch reads PPVCGNELLE…GKSSDCPWNH (82 aa). Cystine bridges form between Cys-5-Cys-24, Cys-16-Cys-34, Cys-18-Cys-29, Cys-28-Cys-51, Cys-42-Cys-48, Cys-47-Cys-72, and Cys-60-Cys-79. The Cell attachment site signature appears at 64–66; that stretch reads RGD.

It belongs to the venom metalloproteinase (M12B) family. P-II subfamily. P-IIa sub-subfamily. Monomer (disintegrin). As to expression, expressed by the venom gland.

It localises to the secreted. Functionally, inhibits fibrinogen interaction with platelets. Acts by binding to the alpha-IIb/beta-3 (ITGA2B/ITGB3) on the platelet surface and inhibits aggregation induced by ADP, thrombin, platelet-activating factor and collagen. The sequence is that of Disintegrin isoform D-2 from Bitis arietans (African puff adder).